We begin with the raw amino-acid sequence, 619 residues long: Mitochondrial Rho GTPase 1 (619 aa).

Residues 1 to 593 (MKKDVRILLV…TQADLKSSTF (593 aa)) lie on the Cytoplasmic side of the membrane. The Miro 1 domain maps to 2 to 168 (KKDVRILLVG…FYYAQKAVLH (167 aa)). GTP is bound by residues Arg14, Gly16, Lys17, Thr18, and Ser19. Thr18 lines the Mg(2+) pocket. Pro35 and Asp57 together coordinate Mg(2+). The GTP site is built by Ser59, Asn118, Lys119, Asp121, Ala149, and Lys150. 2 EF-hand domains span residues 184 to 219 (ACIKALTRIFRISDQDNDGTLNDAELNFFQRICFNT) and 304 to 339 (HAYLFLQSIFDKHDLDRDCALSPDELKDLFKVFPYM). Asp197, Asp199, Asp201, Thr203, Glu208, Asp317, Asp319, Asp321, Ala323, and Glu328 together coordinate Ca(2+). Positions 417–580 (RNVFRCNVVG…FVKLTTMAMY (164 aa)) constitute a Miro 2 domain. Positions 429, 430, 431, 432, 433, 434, 448, 529, 531, 559, and 560 each coordinate GTP. Residue Gly429 participates in Mg(2+) binding. The chain crosses the membrane as a helical; Anchor for type IV membrane protein span at residues 594-616 (WLRASFGATVFAFLGFAMYKALI). Residues 617 to 619 (KQR) lie on the Mitochondrial intermembrane side of the membrane.

The protein belongs to the mitochondrial Rho GTPase family. As to quaternary structure, homodimer.

It localises to the mitochondrion outer membrane. It carries out the reaction GTP + H2O = GDP + phosphate + H(+). It catalyses the reaction ATP + H2O = ADP + phosphate + H(+). The enzyme catalyses UTP + H2O = UDP + phosphate + H(+). In terms of biological role, atypical mitochondrial nucleoside-triphosphatase (NTPase) involved in mitochondrial trafficking. Probably involved in control of anterograde transport of mitochondria and their subcellular distribution. Can hydrolyze GTP, ATP and UTP. The chain is Mitochondrial Rho GTPase 1 (RHOT1) from Gallus gallus (Chicken).